The primary structure comprises 212 residues: 3,4-dihydroxy-2-butanone 4-phosphate synthase (212 aa).

D-ribulose 5-phosphate-binding positions include 37 to 38 (RE), D42, 150 to 154 (RRGHT), and E174. E38 contacts Mg(2+). Residue H153 coordinates Mg(2+).

It belongs to the DHBP synthase family. As to quaternary structure, homodimer. Requires Mg(2+) as cofactor. It depends on Mn(2+) as a cofactor.

The enzyme catalyses D-ribulose 5-phosphate = (2S)-2-hydroxy-3-oxobutyl phosphate + formate + H(+). Its pathway is cofactor biosynthesis; riboflavin biosynthesis; 2-hydroxy-3-oxobutyl phosphate from D-ribulose 5-phosphate: step 1/1. In terms of biological role, catalyzes the conversion of D-ribulose 5-phosphate to formate and 3,4-dihydroxy-2-butanone 4-phosphate. The polypeptide is 3,4-dihydroxy-2-butanone 4-phosphate synthase (Histophilus somni (strain 129Pt) (Haemophilus somnus)).